Reading from the N-terminus, the 357-residue chain is Non-structural protein NS2 (357 aa).

2 disordered regions span residues 163 to 199 (NERE…AREM) and 228 to 267 (LDEK…PKTH). Acidic residues-rich tracts occupy residues 230–241 (EKDEEDGDERED) and 250–260 (DDDEQGEDASD).

It belongs to the orbivirus non-structural protein NS2 family.

Its function is as follows. Single-stranded RNA-binding protein. The protein is Non-structural protein NS2 (Segment-8) of Antilocapra americana (Pronghorn).